The chain runs to 342 residues: Probable dual-specificity RNA methyltransferase RlmN (342 aa).

Residue Glu91 is the Proton acceptor of the active site. Positions 97 to 327 (YKHGNSICVS…TTIRREMGAD (231 aa)) constitute a Radical SAM core domain. Cys104 and Cys332 are joined by a disulfide. [4Fe-4S] cluster-binding residues include Cys111, Cys115, and Cys118. S-adenosyl-L-methionine is bound by residues 158-159 (GE), Ser190, 213-215 (SLH), and Asn289. The S-methylcysteine intermediate role is filled by Cys332.

This sequence belongs to the radical SAM superfamily. RlmN family. [4Fe-4S] cluster serves as cofactor.

The protein localises to the cytoplasm. The enzyme catalyses adenosine(2503) in 23S rRNA + 2 reduced [2Fe-2S]-[ferredoxin] + 2 S-adenosyl-L-methionine = 2-methyladenosine(2503) in 23S rRNA + 5'-deoxyadenosine + L-methionine + 2 oxidized [2Fe-2S]-[ferredoxin] + S-adenosyl-L-homocysteine. It catalyses the reaction adenosine(37) in tRNA + 2 reduced [2Fe-2S]-[ferredoxin] + 2 S-adenosyl-L-methionine = 2-methyladenosine(37) in tRNA + 5'-deoxyadenosine + L-methionine + 2 oxidized [2Fe-2S]-[ferredoxin] + S-adenosyl-L-homocysteine. In terms of biological role, specifically methylates position 2 of adenine 2503 in 23S rRNA and position 2 of adenine 37 in tRNAs. The chain is Probable dual-specificity RNA methyltransferase RlmN from Clostridium botulinum (strain ATCC 19397 / Type A).